We begin with the raw amino-acid sequence, 800 residues long: Phenylalanine--tRNA ligase beta subunit (800 aa).

One can recognise a tRNA-binding domain in the interval threonine 39–leucine 154. The 76-residue stretch at alanine 408 to serine 483 folds into the B5 domain. Mg(2+)-binding residues include aspartate 461, aspartate 467, glutamate 470, and glutamate 471. The FDX-ACB domain occupies proline 708–arginine 800.

Belongs to the phenylalanyl-tRNA synthetase beta subunit family. Type 1 subfamily. As to quaternary structure, tetramer of two alpha and two beta subunits. Requires Mg(2+) as cofactor.

It is found in the cytoplasm. The catalysed reaction is tRNA(Phe) + L-phenylalanine + ATP = L-phenylalanyl-tRNA(Phe) + AMP + diphosphate + H(+). This Staphylococcus aureus (strain USA300) protein is Phenylalanine--tRNA ligase beta subunit.